We begin with the raw amino-acid sequence, 1189 residues long: Disabled homolog 2-interacting protein (1189 aa).

Residues 1–75 (MSAGGNARKS…EPSASTPFRV (75 aa)) are disordered. The segment covering 20 to 38 (LLRRPRLQRQRSRSRSRTR) has biased composition (basic residues). Residues 39-49 (PARESPQERPG) show a composition bias toward basic and acidic residues. The segment covering 59 to 73 (SEKNPSMEPSASTPF) has biased composition (polar residues). In terms of domain architecture, PH spans 101 to 202 (SFRHILPGFR…WMENLRRAVH (102 aa)). The C2 domain occupies 193–311 (WMENLRRAVH…AGRQFVEKWY (119 aa)). The 209-residue stretch at 387-595 (GKVKDFLTDL…TNMQRFLLEI (209 aa)) folds into the Ras-GAP domain. A necessary for interaction with AKT1 region spans residues 646 to 943 (LRDVHTALST…RTPPTLLSTL (298 aa)). Polar residues predominate over residues 653–668 (LSTPGSGQLPGTNDLA). Disordered stretches follow at residues 653–679 (LSTP…SSVS) and 715–738 (RSSG…PDLQ). Positions 669–679 (STPGSGSSSVS) are enriched in low complexity. A compositionally biased stretch (polar residues) spans 715 to 731 (RSSGVQPSPARSSSYSE). At Ser-728 the chain carries Phosphoserine; by MAP3K5 and RIPK1. A Phosphoserine modification is found at Ser-747. 5 disordered regions span residues 804-823 (VPTP…PQLL), 843-865 (PRGL…NSEE), 895-998 (SLTE…SPNA), 1015-1034 (EDEG…SKEE), and 1163-1189 (ARNG…SSNC). A compositionally biased stretch (low complexity) spans 852–865 (EGHSSLSSHSNSEE). A compositionally biased stretch (pro residues) spans 919-931 (QPPPPPPPPPPAP). Composition is skewed to polar residues over residues 939–955 (LLST…TLAS) and 967–976 (LRQQSSSSKG). Phosphoserine occurs at positions 978 and 995. Over residues 1023 to 1034 (PPHRDRLRSKEE) the composition is skewed to basic and acidic residues. Residues 1025-1159 (HRDRLRSKEE…SALTQLKERY (135 aa)) adopt a coiled-coil conformation.

As to quaternary structure, on plasma membrane, exists in an inactive form complexed with TNFR1; in response to TNF-alpha, dissociates from TNFR1 complex, translocates to cytoplasm and forms part of an intracellular signaling complex comprising TRADD, RIPK1, TRAF2 and MAP3K5. Interacts with DAB1. Part of a cytoplasmic complex made of HIPK1, DAB2IP and MAP3K5 in response to TNF-alpha; this complex formation promotes MAP3K5-JNK activation and subsequent apoptosis. Interacts (via N-terminal domain) with JAK2; the interaction occurs in a IFNG/IFN-gamma-dependent manner and inhibits JAK2 autophosphorylation activity. Interacts (via C2 domain) with GSK3B; the interaction stimulates GSK3B kinase activation. Interacts (via C2 domain) with PPP2CA. Interacts (via proline-rich motif) with a regulatory p85 subunit (via SH3 domain) of the PI3K complex; the interaction inhibits the PI3K-AKT complex activity in a TNF-alpha-dependent manner in prostate cancer (PCa) cells. Interacts with AKT1; the interaction is increased in a TNF-alpha-induced manner. Interacts (via C2 domain and active form preferentially) with KDR/VEGFR2 (tyrosine-phosphorylated active form preferentially); the interaction occurs at the late phase of VEGFA response and inhibits KDR/VEGFR2 activity. Interacts (via N-terminus C2 domain) with MAP3K5 ('Ser-966' dephosphorylated form preferentially); the interaction occurs in a TNF-alpha-induced manner. Interacts (via Ras-GAP domain) with the catalytic subunit of protein phosphatase PP2A; the interaction occurs in resting endothelial cells, is further enhanced by TNF-alpha stimulation and is required to bridge PP2A to MAP3K5. Interacts (via C-terminus PER domain) with TRAF2 (via zinc fingers); the interaction occurs in a TNF-alpha-dependent manner. Interacts with 14-3-3 proteins; the interaction occurs in a TNF-alpha-dependent manner. Interacts (via Ras-GAP domain) with RIPK1 (via kinase domain); the interaction occurs in a TNF-alpha-dependent manner. Interacts (via PH domain) with ERN1. Interacts with TRAF2. Interacts (via NPXY motif) with DAB2 (via PID domain). Interacts with RAB40C; acts as a GAP for RAB40C. In response to TNF-alpha-induction, phosphorylated at Ser-728; phosphorylation leads to a conformational change, and thus, increases its association with 14-3-3 proteins, MAP3K5, RIPK1 and TRAF2 in endothelial cells; also stimulates regulatory p85 subunit sequestring and PI3K-p85 complex activity inhibition. In terms of tissue distribution, expressed in vascular endothelium of muscle and aorta, in smooth muscle cells of aorta and epithelial cells of lung. Expressed throughout the brain, including olfactory bulb, hypothalamus, cerebellum and cerebral cortex. Expressed in the soma and processes of neurons in a variety of brain structures, including the developing cerebral cortex, CA1 pyramidal neurons and Purkinje cells. Poorly expressed in medulloblastoma cells compared to cerebellar precursor proliferating progenitor cells (at protein level). Highly expressed in the brain, salivary gland, and testis; moderate expression in kidney and heart. Low expression in the lung, seminal vesicle, ventral prostate, epididymis, liver, and bladder. Very low expression in the coagulation gland and skeleton muscles. Lowest expression seen in spleen.

It localises to the cytoplasm. The protein localises to the cell membrane. The protein resides in the membrane. It is found in the cell projection. Its subcellular location is the dendrite. Functions as a scaffold protein implicated in the regulation of a large spectrum of both general and specialized signaling pathways. Involved in several processes such as innate immune response, inflammation and cell growth inhibition, apoptosis, cell survival, angiogenesis, cell migration and maturation. Also plays a role in cell cycle checkpoint control; reduces G1 phase cyclin levels resulting in G0/G1 cell cycle arrest. Mediates signal transduction by receptor-mediated inflammatory signals, such as the tumor necrosis factor (TNF), interferon (IFN) or lipopolysaccharide (LPS). Modulates the balance between phosphatidylinositol 3-kinase (PI3K)-AKT-mediated cell survival and apoptosis stimulated kinase (MAP3K5)-JNK signaling pathways; sequesters both AKT1 and MAP3K5 and counterbalances the activity of each kinase by modulating their phosphorylation status in response to pro-inflammatory stimuli. Acts as a regulator of the endoplasmic reticulum (ER) unfolded protein response (UPR) pathway; specifically involved in transduction of the ER stress-response to the JNK cascade through ERN1. Mediates TNF-alpha-induced apoptosis activation by facilitating dissociation of inhibitor 14-3-3 from MAP3K5; recruits the PP2A phosphatase complex which dephosphorylates MAP3K5 on 'Ser-966', leading to the dissociation of 13-3-3 proteins and activation of the MAP3K5-JNK signaling pathway in endothelial cells. Also mediates TNF/TRAF2-induced MAP3K5-JNK activation, while it inhibits CHUK-NF-kappa-B signaling. Acts a negative regulator in the IFN-gamma-mediated JAK-STAT signaling cascade by inhibiting smooth muscle cell (VSMCs) proliferation and intimal expansion, and thus, prevents graft arteriosclerosis (GA). Acts as a GTPase-activating protein (GAP) for the ADP ribosylation factor 6 (ARF6) and Ras. Promotes hydrolysis of the ARF6-bound GTP and thus, negatively regulates phosphatidylinositol 4,5-bisphosphate (PIP2)-dependent TLR4-TIRAP-MyD88 and NF-kappa-B signaling pathways in endothelial cells in response to lipopolysaccharides (LPS). Binds specifically to phosphatidylinositol 4-phosphate (PtdIns4P) and phosphatidylinositol 3-phosphate (PtdIns3P). In response to vascular endothelial growth factor (VEGFA), acts as a negative regulator of the VEGFR2-PI3K-mediated angiogenic signaling pathway by inhibiting endothelial cell migration and tube formation. In the developing brain, promotes both the transition from the multipolar to the bipolar stage and the radial migration of cortical neurons from the ventricular zone toward the superficial layer of the neocortex in a glial-dependent locomotion process. Probable downstream effector of the Reelin signaling pathway; promotes Purkinje cell (PC) dendrites development and formation of cerebellar synapses. Also functions as a tumor suppressor protein in prostate cancer progression; prevents cell proliferation and epithelial-to-mesenchymal transition (EMT) through activation of the glycogen synthase kinase-3 beta (GSK3B)-induced beta-catenin and inhibition of PI3K-AKT and Ras-MAPK survival downstream signaling cascades, respectively. This Mus musculus (Mouse) protein is Disabled homolog 2-interacting protein (Dab2ip).